The chain runs to 147 residues: Testis-expressed protein 29 (147 aa).

The Extracellular portion of the chain corresponds to 1-57 (MRYAPEFKKSPSHLLKKFAVCDIPLYDICDYNVSRDRCKELGCCFYKGICYEKAVPS). The chain crosses the membrane as a helical span at residues 58 to 78 (YVQVFSALIVIIAGAFVITII). The Cytoplasmic portion of the chain corresponds to 79–147 (YRVIQESRRE…IVTEEEETED (69 aa)). The disordered stretch occupies residues 86–147 (RREKEVPTEA…IVTEEEETED (62 aa)). Residues 99 to 108 (AKSSVQVETQ) are compositionally biased toward polar residues. Over residues 109-120 (PPSSAGAGSKAP) the composition is skewed to low complexity. A compositionally biased stretch (basic and acidic residues) spans 125–135 (PQSKESGREDA).

The protein localises to the membrane. This Bos taurus (Bovine) protein is Testis-expressed protein 29 (TEX29).